The following is an 880-amino-acid chain: Probable potassium channel AKT5 (880 aa).

The Cytoplasmic portion of the chain corresponds to 1–82 (MGIEKRKKMV…PFDPRYRAWD (82 aa)). The helical transmembrane segment at 83 to 103 (WFLVILVLYTAWASPFEFGFL) threads the bilayer. The Extracellular segment spans residues 104–111 (QTPRAPLS). A helical transmembrane segment spans residues 112–132 (ILDNVVNGFFAVDIVLTFFVA). Topologically, residues 133–153 (FLDKATYLLVDDPKRIAWRYT) are cytoplasmic. Residues 154-174 (STWLIFDVVSTVPYELFGSLL) form a helical membrane-spanning segment. Topologically, residues 175–182 (HNTIQGYG) are extracellular. Residues 183-203 (IFSMLRLWRLHRVSKCFARLE) traverse the membrane as a helical; Voltage-sensor segment. The Cytoplasmic portion of the chain corresponds to 204-217 (KDRKYNYFWIRCTK). A helical transmembrane segment spans residues 218 to 238 (LLLVSLFVVHCGACFCYSIAA). At 239 to 265 (HYPDPSMTFMALAEANWKQKSLLIRYV) the chain is on the extracellular side. Residues 266 to 285 (TAMYWSITTFSTTGYGDIHG) constitute an intramembrane region (pore-forming). Residues 286-291 (NNAEER) lie on the Extracellular side of the membrane. A helical transmembrane segment spans residues 292-312 (AFILFYMIFNLGLLAYIIGNM). Over 313–880 (TNLVVHVTSR…GDFLLLLKVS (568 aa)) the chain is Cytoplasmic. 396–517 (LFHGISNDLL…IMNNLLQHLK (122 aa)) provides a ligand contact to a nucleoside 3',5'-cyclic phosphate. ANK repeat units lie at residues 541–570 (DLPL…NPNE), 574–603 (NGRT…DPNI), 607–636 (EGSV…TLSF), 637–667 (DTVG…DISL), and 671–700 (NGTT…DMDK). A KHA domain is found at 809–880 (VGGVYPARVT…GDFLLLLKVS (72 aa)).

Belongs to the potassium channel family. Plant (TC 1.A.1.4) subfamily. In terms of assembly, the potassium channel is probably composed of a homo- or heterotetrameric complex of pore-forming subunits. As to expression, predominantly expressed in flowers.

The protein localises to the membrane. In terms of biological role, probable potassium channel. May interact with the cytoskeleton or with regulatory proteins. This is Probable potassium channel AKT5 (AKT5) from Arabidopsis thaliana (Mouse-ear cress).